The following is a 229-amino-acid chain: Potassium/proton antiporter CemA (229 aa).

3 consecutive transmembrane segments (helical) span residues 7–27 (FLPL…SLSF), 106–126 (MILH…YSIL), and 189–209 (IISG…KYWI).

It belongs to the CemA family.

The protein resides in the plastid. The protein localises to the chloroplast inner membrane. The catalysed reaction is K(+)(in) + H(+)(out) = K(+)(out) + H(+)(in). Its function is as follows. Contributes to K(+)/H(+) antiport activity by supporting proton efflux to control proton extrusion and homeostasis in chloroplasts in a light-dependent manner to modulate photosynthesis. Prevents excessive induction of non-photochemical quenching (NPQ) under continuous-light conditions. Indirectly promotes efficient inorganic carbon uptake into chloroplasts. This Eucalyptus globulus subsp. globulus (Tasmanian blue gum) protein is Potassium/proton antiporter CemA.